The chain runs to 180 residues: Adenine phosphoribosyltransferase (180 aa).

The protein belongs to the purine/pyrimidine phosphoribosyltransferase family. In terms of assembly, homodimer.

The protein localises to the cytoplasm. It catalyses the reaction AMP + diphosphate = 5-phospho-alpha-D-ribose 1-diphosphate + adenine. It functions in the pathway purine metabolism; AMP biosynthesis via salvage pathway; AMP from adenine: step 1/1. Catalyzes a salvage reaction resulting in the formation of AMP, that is energically less costly than de novo synthesis. The polypeptide is Adenine phosphoribosyltransferase (Sinorhizobium medicae (strain WSM419) (Ensifer medicae)).